A 190-amino-acid polypeptide reads, in one-letter code: 2-phospho-L-lactate guanylyltransferase (190 aa).

The protein belongs to the CofC family. In terms of assembly, homodimer.

The enzyme catalyses (2S)-2-phospholactate + GTP + H(+) = (2S)-lactyl-2-diphospho-5'-guanosine + diphosphate. It participates in cofactor biosynthesis; coenzyme F420 biosynthesis. Its function is as follows. Guanylyltransferase that catalyzes the activation of (2S)-2-phospholactate (2-PL) as (2S)-lactyl-2-diphospho-5'-guanosine, via the condensation of 2-PL with GTP. It is involved in the biosynthesis of coenzyme F420, a hydride carrier cofactor. This chain is 2-phospho-L-lactate guanylyltransferase, found in Methanopyrus kandleri (strain AV19 / DSM 6324 / JCM 9639 / NBRC 100938).